A 335-amino-acid chain; its full sequence is Anthranilate phosphoribosyltransferase (335 aa).

5-phospho-alpha-D-ribose 1-diphosphate is bound by residues Gly79, 82 to 83, Thr87, 89 to 92, 107 to 115, and Ser119; these read GD, NVST, and KHCNKGVSS. Gly79 is a binding site for anthranilate. Residue Ser91 coordinates Mg(2+). Asn110 contacts anthranilate. Arg165 serves as a coordination point for anthranilate. Positions 223 and 224 each coordinate Mg(2+).

Belongs to the anthranilate phosphoribosyltransferase family. As to quaternary structure, homodimer. Requires Mg(2+) as cofactor.

It carries out the reaction N-(5-phospho-beta-D-ribosyl)anthranilate + diphosphate = 5-phospho-alpha-D-ribose 1-diphosphate + anthranilate. It participates in amino-acid biosynthesis; L-tryptophan biosynthesis; L-tryptophan from chorismate: step 2/5. Functionally, catalyzes the transfer of the phosphoribosyl group of 5-phosphorylribose-1-pyrophosphate (PRPP) to anthranilate to yield N-(5'-phosphoribosyl)-anthranilate (PRA). The sequence is that of Anthranilate phosphoribosyltransferase from Buchnera aphidicola subsp. Schizaphis graminum (strain Sg).